The sequence spans 692 residues: Elongation factor G (692 aa).

Residues 8-282 enclose the tr-type G domain; it reads EKTRNIGIMA…AVLDYLPAPT (275 aa). GTP is bound by residues 17-24, 81-85, and 135-138; these read AHIDAGKT, DTPGH, and NKMD.

It belongs to the TRAFAC class translation factor GTPase superfamily. Classic translation factor GTPase family. EF-G/EF-2 subfamily.

The protein resides in the cytoplasm. Functionally, catalyzes the GTP-dependent ribosomal translocation step during translation elongation. During this step, the ribosome changes from the pre-translocational (PRE) to the post-translocational (POST) state as the newly formed A-site-bound peptidyl-tRNA and P-site-bound deacylated tRNA move to the P and E sites, respectively. Catalyzes the coordinated movement of the two tRNA molecules, the mRNA and conformational changes in the ribosome. This chain is Elongation factor G, found in Bacillus licheniformis (strain ATCC 14580 / DSM 13 / JCM 2505 / CCUG 7422 / NBRC 12200 / NCIMB 9375 / NCTC 10341 / NRRL NRS-1264 / Gibson 46).